The primary structure comprises 297 residues: N-acetylneuraminate lyase (297 aa).

S47 and T48 together coordinate aceneuramate. Y137 acts as the Proton donor in catalysis. K165 functions as the Schiff-base intermediate with substrate in the catalytic mechanism. Aceneuramate contacts are provided by T167, G189, D191, E192, and S208.

The protein belongs to the DapA family. NanA subfamily. In terms of assembly, homotetramer.

Its subcellular location is the cytoplasm. The catalysed reaction is aceneuramate = aldehydo-N-acetyl-D-mannosamine + pyruvate. It functions in the pathway amino-sugar metabolism; N-acetylneuraminate degradation; D-fructose 6-phosphate from N-acetylneuraminate: step 1/5. Catalyzes the reversible aldol cleavage of N-acetylneuraminic acid (sialic acid; Neu5Ac) to form pyruvate and N-acetylmannosamine (ManNAc) via a Schiff base intermediate. The protein is N-acetylneuraminate lyase of Salmonella choleraesuis (strain SC-B67).